The primary structure comprises 197 residues: Thymidine kinase (197 aa).

ATP contacts are provided by residues 15–22 (GPMFAGKT) and 93–96 (DEVQ). Residue Glu94 is the Proton acceptor of the active site. Positions 150, 153, 188, and 191 each coordinate Zn(2+).

This sequence belongs to the thymidine kinase family. As to quaternary structure, homotetramer.

The protein localises to the cytoplasm. It catalyses the reaction thymidine + ATP = dTMP + ADP + H(+). In Thermococcus kodakarensis (strain ATCC BAA-918 / JCM 12380 / KOD1) (Pyrococcus kodakaraensis (strain KOD1)), this protein is Thymidine kinase.